We begin with the raw amino-acid sequence, 465 residues long: Argininosuccinate lyase (465 aa).

It belongs to the lyase 1 family. Argininosuccinate lyase subfamily.

It localises to the cytoplasm. It carries out the reaction 2-(N(omega)-L-arginino)succinate = fumarate + L-arginine. Its pathway is amino-acid biosynthesis; L-arginine biosynthesis; L-arginine from L-ornithine and carbamoyl phosphate: step 3/3. The polypeptide is Argininosuccinate lyase (Hyphomonas neptunium (strain ATCC 15444)).